A 243-amino-acid polypeptide reads, in one-letter code: Zinc import ATP-binding protein ZnuC 2 (243 aa).

Residues 3-218 (LSLHQLSVKF…PEYKVLFGLD (216 aa)) enclose the ABC transporter domain. 35-42 (GPNGSGKS) is a binding site for ATP.

The protein belongs to the ABC transporter superfamily. Zinc importer (TC 3.A.1.15.5) family. The complex is composed of two ATP-binding proteins (ZnuC), two transmembrane proteins (ZnuB) and a solute-binding protein (ZnuA).

It is found in the cell inner membrane. It catalyses the reaction Zn(2+)(out) + ATP(in) + H2O(in) = Zn(2+)(in) + ADP(in) + phosphate(in) + H(+)(in). Its function is as follows. Part of the ABC transporter complex ZnuABC involved in zinc import. Responsible for energy coupling to the transport system. The polypeptide is Zinc import ATP-binding protein ZnuC 2 (Aliivibrio fischeri (strain ATCC 700601 / ES114) (Vibrio fischeri)).